The sequence spans 505 residues: Glutamate--tRNA ligase (505 aa).

The short motif at 12 to 22 is the 'HIGH' region element; sequence PSPTGPLHIGG. Residues 260–264 carry the 'KMSKS' region motif; it reads KLSKR. K263 contributes to the ATP binding site.

Belongs to the class-I aminoacyl-tRNA synthetase family. Glutamate--tRNA ligase type 1 subfamily. As to quaternary structure, monomer.

It localises to the cytoplasm. It catalyses the reaction tRNA(Glu) + L-glutamate + ATP = L-glutamyl-tRNA(Glu) + AMP + diphosphate. Its function is as follows. Catalyzes the attachment of glutamate to tRNA(Glu) in a two-step reaction: glutamate is first activated by ATP to form Glu-AMP and then transferred to the acceptor end of tRNA(Glu). This is Glutamate--tRNA ligase from Porphyromonas gingivalis (strain ATCC BAA-308 / W83).